A 181-amino-acid chain; its full sequence is D-lyxose/D-mannose isomerase (181 aa).

Mn(2+) is bound by residues H75, H77, E88, and H143.

The protein belongs to the D-lyxose ketol-isomerase family. As to quaternary structure, homodimer. The cofactor is Mn(2+).

It catalyses the reaction D-lyxose = D-xylulose. The catalysed reaction is D-mannose = D-fructose. Functionally, sugar isomerase that catalyzes the reversible isomerization of D-lyxose to D-xylulose, and D-mannose to D-fructose. Shows optimum activity using D-lyxose as substrate, but can also effectively catalyze the isomerization between D-fructose and D-mannose. The polypeptide is D-lyxose/D-mannose isomerase (Thermosediminibacter oceani (strain ATCC BAA-1034 / DSM 16646 / JW/IW-1228P)).